Here is a 405-residue protein sequence, read N- to C-terminus: MSHKDRRGNSSNDGSSFKLNETFTSSEVEVKPTFESMGLREELLRGIFNYGFEKPSAIQQRAILPIIKGRDTIAQAQSGTGKTATFSIGALQCVEVNVRSPQVLILSPTRELAQQIQKVALALSEFMNIQVHACVGGKNLSDDVKKLETGVHIVSGTPGRVLDMITRKSLPTRHIKMMILDEADEMLSLGFQQQINDVYRYLPNGTQIVLVSATLTQDVVSMTEKFMTKPVRILLKRDELTLDGIKQFFVSVEKEDWKFGTLCDIYDSLTITQAVIFCNTKKKVDQLTEQMRDANFTVASMHGDMVQKEREEIIKSFRSGENRVLITTDILARGIDVQQVSLVINYDLPIDRENYIHRIGRSGRFGRKGVAINFVKNSDIRILRDIEQFYSTQIDEMPVNFASII.

A Q motif motif is present at residues 32 to 60 (PTFESMGLREELLRGIFNYGFEKPSAIQQ). Positions 63–233 (ILPIIKGRDT…EKFMTKPVRI (171 aa)) constitute a Helicase ATP-binding domain. 76–83 (AQSGTGKT) contributes to the ATP binding site. The DEAD box signature appears at 181–184 (DEAD). The Helicase C-terminal domain occupies 244–405 (GIKQFFVSVE…EMPVNFASII (162 aa)).

This sequence belongs to the DEAD box helicase family. eIF4A subfamily.

It is found in the cytoplasm. It carries out the reaction ATP + H2O = ADP + phosphate + H(+). ATP-dependent RNA helicase which is a subunit of the eIF4F complex involved in cap recognition and is required for mRNA binding to ribosome. In the current model of translation initiation, eIF4A unwinds RNA secondary structures in the 5'-UTR of mRNAs which is necessary to allow efficient binding of the small ribosomal subunit, and subsequent scanning for the initiator codon. In Dictyostelium discoideum (Social amoeba), this protein is Eukaryotic initiation factor 4A (tifA).